The following is a 590-amino-acid chain: MAESINGLKRTHYAGKISTQQIGKKVTVMGWVQKRRDHGGVIFIDLRDRSGIVQVVFNPDNNERAFKKATELRSEYVIAVEGEVEKRPEGNINPDIPTGEIEIRGNRLRILDESETPPFEIDDDINVGEDLRLKYRYLDLRRPRMKKNLELRHRVMKTTRDYLDDNGFWEVETPILTRSTPEGARDYLVPSRIHPGHFYALPQSPQLFKQLLMVGGVERYFQIARCFRDEDLRANRQPEFTQIDIEMSFIDKEDVFSLVNGLMKRLFALVDIEIPEKIPVMPYQEAIDRFGSDKPDLRFGMELKDVSDVVKDSEFRVFSGVVKDGGQVKGINFKGGAISPRSKIDGYTDYVKIFGAKGLAWIALKENGLKSPIAKFLSEKELEGIKEKMGAQTGDLLLFVADKPSIVADALGNLRLKIAREEGLIPDGVYKFVWVVDFPLMEYDEDEGRYVAKHHPFTAPLDEDIPLLDSNPEKIRSKAYDFVLNGEELGGGSIRINNKDLQMKVFNALNISEEKASDKFGFLLEAFNYGAPPHGGIAFGLDRLLMVLSGSESMRDVIAFPKTQKASSPLTEAPSTVAEKQLRELHIKID.

Glu182 lines the L-aspartate pocket. The aspartate stretch occupies residues 206-209 (QLFK). Arg228 lines the L-aspartate pocket. ATP contacts are provided by residues 228-230 (RDE) and Gln237. An L-aspartate-binding site is contributed by His454. Glu488 is an ATP binding site. An L-aspartate-binding site is contributed by Arg495. 540 to 543 (GLDR) serves as a coordination point for ATP.

The protein belongs to the class-II aminoacyl-tRNA synthetase family. Type 1 subfamily. In terms of assembly, homodimer.

It is found in the cytoplasm. The catalysed reaction is tRNA(Asx) + L-aspartate + ATP = L-aspartyl-tRNA(Asx) + AMP + diphosphate. Aspartyl-tRNA synthetase with relaxed tRNA specificity since it is able to aspartylate not only its cognate tRNA(Asp) but also tRNA(Asn). Reaction proceeds in two steps: L-aspartate is first activated by ATP to form Asp-AMP and then transferred to the acceptor end of tRNA(Asp/Asn). This Halothermothrix orenii (strain H 168 / OCM 544 / DSM 9562) protein is Aspartate--tRNA(Asp/Asn) ligase.